We begin with the raw amino-acid sequence, 461 residues long: Coronin-1A (461 aa).

The residue at position 2 (S2) is an N-acetylserine. At S2 the chain carries Phosphoserine; by PKC. WD repeat units follow at residues 13–63 (HVFG…LVLP), 73–110 (NAPT…MVWE), 123–160 (PVVT…MVWD), 164–204 (GAAM…RIIE), 207–251 (KGTV…ALWD), 258–296 (PLSL…RYFE), and 302–349 (PFLH…EPIA). Basic and acidic residues predominate over residues 403–418 (ELRVNRGLDTGRRRAA). Residues 403-432 (ELRVNRGLDTGRRRAAPEASGTPSSDAVSR) are disordered. At T412 the chain carries Phosphothreonine; by PKC. S422 carries the phosphoserine modification. A coiled-coil region spans residues 424-460 (TPSSDAVSRLEEEMRKLQATVQELQKRLDRLEETVQA). Position 449 is an N6-acetyllysine (K449).

Belongs to the WD repeat coronin family. In terms of assembly, binds actin. In terms of processing, phosphorylation at Thr-412 by PKC strongly down-regulates the association with actin. Polyubiquitinated by RNF128 with 'Lys-48'-linked chains, leading to proteasomal degradation. As to expression, expressed in brain, thymus, spleen, bone marrow and lymph node. Low in lung and gut.

The protein localises to the cytoplasm. It is found in the cytoskeleton. Its subcellular location is the cell cortex. The protein resides in the cytoplasmic vesicle. It localises to the phagosome membrane. Functionally, may be a crucial component of the cytoskeleton of highly motile cells, functioning both in the invagination of large pieces of plasma membrane, as well as in forming protrusions of the plasma membrane involved in cell locomotion. In mycobacteria-infected cells, its retention on the phagosomal membrane prevents fusion between phagosomes and lysosomes. This chain is Coronin-1A (CORO1A), found in Homo sapiens (Human).